The chain runs to 436 residues: Voltage-gated purine nucleotide uniporter SLC17A9 (436 aa).

Transmembrane regions (helical) follow at residues 64–84, 92–112, 118–138, 158–178, 181–201, 239–259, 276–296, 316–336, 369–389, and 402–422; these read IVLS…GHLG, VILL…LLAH, LAFM…YFPA, IVGA…SLLL, YGWQ…VWYV, PAVW…FILL, WIFN…SGFL, GMGL…SSFC, GFLF…GVCL, and CLFN…LVFG.

The protein belongs to the major facilitator superfamily. Sodium/anion cotransporter family. In terms of tissue distribution, widely expressed, but more predominantly in adrenal gland, brain and thyroid.

It is found in the cytoplasmic vesicle. Its subcellular location is the secretory vesicle. It localises to the chromaffin granule membrane. The protein localises to the secretory vesicle membrane. The protein resides in the lysosome membrane. It catalyses the reaction ATP(in) = ATP(out). The catalysed reaction is ADP(in) = ADP(out). It carries out the reaction GTP(in) = GTP(out). Its activity is regulated as follows. Activity is chloride-dependent. Inhibited by AMP-PNP, gammaS-ATP, diadenosine triphosphate, 4,4'- diisothiocyanatostilbene-2,2'-disulfonate (DIDS) and Evans blue. Voltage-gated ATP nucleotide uniporter that can also transport the purine nucleotides ADP and GTP. Uses the membrane potential as the driving force to control ATP accumulation in lysosomes and secretory vesicles. By controlling ATP storage in lysosomes, regulates ATP-dependent proteins of these organelles. Also indirectly regulates the exocytosis of ATP through its import into lysosomes in astrocytes and secretory vesicles such as adrenal chromaffin granules, mucin granules and synaptic vesicles. This Homo sapiens (Human) protein is Voltage-gated purine nucleotide uniporter SLC17A9.